A 269-amino-acid chain; its full sequence is Phosphatidylglycerol--prolipoprotein diacylglyceryl transferase (269 aa).

The next 7 helical transmembrane spans lie at V10–I30, M56–Y76, W92–F112, F120–I140, P174–F194, M202–V222, and L237–L257. Residue R139 coordinates a 1,2-diacyl-sn-glycero-3-phospho-(1'-sn-glycerol).

Belongs to the Lgt family.

The protein localises to the cell inner membrane. The catalysed reaction is L-cysteinyl-[prolipoprotein] + a 1,2-diacyl-sn-glycero-3-phospho-(1'-sn-glycerol) = an S-1,2-diacyl-sn-glyceryl-L-cysteinyl-[prolipoprotein] + sn-glycerol 1-phosphate + H(+). Its pathway is protein modification; lipoprotein biosynthesis (diacylglyceryl transfer). In terms of biological role, catalyzes the transfer of the diacylglyceryl group from phosphatidylglycerol to the sulfhydryl group of the N-terminal cysteine of a prolipoprotein, the first step in the formation of mature lipoproteins. This chain is Phosphatidylglycerol--prolipoprotein diacylglyceryl transferase, found in Pseudomonas fluorescens (strain ATCC BAA-477 / NRRL B-23932 / Pf-5).